Here is a 265-residue protein sequence, read N- to C-terminus: Type III pantothenate kinase (265 aa).

An ATP-binding site is contributed by 6-13; the sequence is DVGNTHTV. 112 to 115 serves as a coordination point for substrate; the sequence is GADR. The active-site Proton acceptor is Asp-114. Asp-134 contacts K(+). Thr-137 lines the ATP pocket. Substrate is bound at residue Thr-189.

It belongs to the type III pantothenate kinase family. In terms of assembly, homodimer. It depends on NH4(+) as a cofactor. The cofactor is K(+).

It localises to the cytoplasm. The enzyme catalyses (R)-pantothenate + ATP = (R)-4'-phosphopantothenate + ADP + H(+). It participates in cofactor biosynthesis; coenzyme A biosynthesis; CoA from (R)-pantothenate: step 1/5. In terms of biological role, catalyzes the phosphorylation of pantothenate (Pan), the first step in CoA biosynthesis. This is Type III pantothenate kinase from Streptomyces griseus subsp. griseus (strain JCM 4626 / CBS 651.72 / NBRC 13350 / KCC S-0626 / ISP 5235).